Consider the following 204-residue polypeptide: Urease accessory protein UreG (204 aa).

12–19 serves as a coordination point for GTP; that stretch reads GPVGSGKT.

It belongs to the SIMIBI class G3E GTPase family. UreG subfamily. In terms of assembly, homodimer. UreD, UreF and UreG form a complex that acts as a GTP-hydrolysis-dependent molecular chaperone, activating the urease apoprotein by helping to assemble the nickel containing metallocenter of UreC. The UreE protein probably delivers the nickel.

Its subcellular location is the cytoplasm. Its function is as follows. Facilitates the functional incorporation of the urease nickel metallocenter. This process requires GTP hydrolysis, probably effectuated by UreG. In Stutzerimonas stutzeri (strain A1501) (Pseudomonas stutzeri), this protein is Urease accessory protein UreG.